The sequence spans 1004 residues: Receptor-type tyrosine-protein phosphatase N2 (1004 aa).

An N-terminal signal peptide occupies residues 1-27 (MGLPLPLLLLLLLPPPLPRALPAPASA). The segment at 1-409 (MGLPLPLLLL…PEAPLLEKSS (409 aa)) is involved in localization to secretory granules; interaction with CPE. Topologically, residues 28 to 603 (RGRQLPGRLG…HPEEQEDSTK (576 aa)) are extracellular. Arginine 259 carries the omega-N-methylarginine modification. Disordered stretches follow at residues 274–294 (APALSQRWPLPPGDSKDSLSM), 333–360 (QSDPVEGSQESHGRGAEGQLREQADAPE), and 393–459 (DHGS…WRLE). The residue at position 340 (serine 340) is a Phosphoserine. Basic and acidic residues-rich tracts occupy residues 341–356 (QESHGRGAEGQLREQA) and 407–418 (KSSRAEMKKSEQ). Over residues 419–430 (PEEVLSSEEETA) the composition is skewed to acidic residues. Residues serine 424 and serine 425 each carry the phosphoserine modification. Over residues 431-450 (GVEHVKSRTYSKDLLERKPN) the composition is skewed to basic and acidic residues. A glycan (N-linked (GlcNAc...) asparagine) is linked at asparagine 553. Residues 604–624 (FIVLTFLSIACILAVLLASSL) traverse the membrane as a helical segment. The Cytoplasmic portion of the chain corresponds to 625–1004 (AYCLRHNSHY…VNAILKALPQ (380 aa)). Residues 655–664 (YQELCRQRMA) carry the Tyrosine-based internalization motif motif. The tract at residues 665-710 (VRPQDHSEGPHTSRINSVSSQLSDGPMPSPSARSSTSSWSEEPAQS) is disordered. Positions 677–687 (SRINSVSSQLS) are enriched in polar residues. At serine 681 the chain carries Phosphoserine; by PKA. Serine 687 bears the Phosphoserine mark. Residues 694 to 710 (PSARSSTSSWSEEPAQS) show a composition bias toward low complexity. Phosphothreonine; by PKA is present on threonine 700. Positions 734 to 994 (LEKEWEALCA…EFALTAVAEE (261 aa)) constitute a Tyrosine-protein phosphatase domain. Substrate-binding positions include aspartate 902 and 934–940 (CSDGAGR). Residue cysteine 934 is the Phosphocysteine intermediate of the active site. Residue lysine 959 is modified to N6-acetyllysine. Position 979 (glutamine 979) interacts with substrate. Positions 993–999 (EEVNAIL) match the Leucine-based sorting signal motif.

It belongs to the protein-tyrosine phosphatase family. Receptor class 8 subfamily. As to quaternary structure, self-associates. Interacts (via cytoplasmic domain) with PTPRN (via cytoplasmic domain). Interacts (precursor form) with CPE. Interacts with HAP1. Interacts with AP2A1 or AP2A2 and AP1G1; indicative for an association with adaptor protein complex 2 (AP-2) and adaptor protein complex 1 (AP-1). Interacts with AP2M1; indicative for an association with adaptor protein complex 2 (AP-2). Interacts with MYO5A. Subject to proteolytic cleavage at multiple sites.

It is found in the cytoplasmic vesicle. The protein localises to the secretory vesicle membrane. The protein resides in the secretory vesicle. Its subcellular location is the synaptic vesicle membrane. The enzyme catalyses O-phospho-L-tyrosyl-[protein] + H2O = L-tyrosyl-[protein] + phosphate. Functionally, plays a role in vesicle-mediated secretory processes. Required for normal accumulation of secretory vesicles in hippocampus, pituitary and pancreatic islets. Required for the accumulation of normal levels of insulin-containing vesicles and preventing their degradation. Plays a role in insulin secretion in response to glucose stimuli. Required for normal accumulation of the neurotransmitters norepinephrine, dopamine and serotonin in the brain. In females, but not in males, required for normal accumulation and secretion of pituitary hormones, such as luteinizing hormone (LH) and follicle-stimulating hormone (FSH). Required to maintain normal levels of renin expression and renin release. May regulate catalytic active protein-tyrosine phosphatases such as PTPRA through dimerization. Has phosphatidylinositol phosphatase activity; the PIPase activity is involved in its ability to regulate insulin secretion. Can dephosphorylate phosphatidylinositol 4,5-biphosphate, phosphatidylinositol 5-phosphate and phosphatidylinositol 3-phosphate. Regulates PI(4,5)P2 level in the plasma membrane and localization of cofilin at the plasma membrane and thus is indirectly involved in regulation of actin dynamics related to cell migration and metastasis; upon hydrolysis of PI(4,5)P2 cofilin is released from the plasma membrane and acts in the cytoplasm in severing F-actin filaments. The chain is Receptor-type tyrosine-protein phosphatase N2 (Ptprn2) from Rattus norvegicus (Rat).